We begin with the raw amino-acid sequence, 336 residues long: Fimbrial adhesin PapGII (336 aa).

Positions 1-20 (MKKWFPALLFSLCVSGESSA) are cleaved as a signal peptide. Intrachain disulfides connect cysteine 64–cysteine 138 and cysteine 217–cysteine 249. D-galactose contacts are provided by residues glutamate 79 and 124–127 (GYKW).

The protein belongs to the adhesin PapG family.

Its subcellular location is the secreted. It is found in the fimbrium. In terms of biological role, tip adhesin component of type P pili that plays a critical role in kidney infection through targeted interaction with the globoseries glycolipids containing the Gal-alpha(1-4)-Gal disaccharide present on uroepithelial cells. In turn, transcriptionally regulates host gene expression in kidney cells, leading to inflammatory pathway activation and renal tissue damage. Acts thereby as key determinant of invasive uropathogenic E.coli (UPEC), which cause pyelonephritis and urinary-source bacteremia. In Escherichia coli O6:H1 (strain CFT073 / ATCC 700928 / UPEC), this protein is Fimbrial adhesin PapGII.